Consider the following 603-residue polypeptide: Aspartate--tRNA(Asp/Asn) ligase (603 aa).

Residues 205-208 are aspartate; the sequence is QLFK. Arginine 227 is an L-aspartate binding site. ATP is bound by residues 227-229 and glutamine 236; that span reads RDE. Residue histidine 463 coordinates L-aspartate. Glutamate 497 provides a ligand contact to ATP. Position 504 (arginine 504) interacts with L-aspartate. 549–552 is an ATP binding site; sequence GMDR.

The protein belongs to the class-II aminoacyl-tRNA synthetase family. Type 1 subfamily. As to quaternary structure, homodimer.

The protein resides in the cytoplasm. The enzyme catalyses tRNA(Asx) + L-aspartate + ATP = L-aspartyl-tRNA(Asx) + AMP + diphosphate. Its function is as follows. Aspartyl-tRNA synthetase with relaxed tRNA specificity since it is able to aspartylate not only its cognate tRNA(Asp) but also tRNA(Asn). Reaction proceeds in two steps: L-aspartate is first activated by ATP to form Asp-AMP and then transferred to the acceptor end of tRNA(Asp/Asn). This Anaeromyxobacter dehalogenans (strain 2CP-1 / ATCC BAA-258) protein is Aspartate--tRNA(Asp/Asn) ligase.